We begin with the raw amino-acid sequence, 297 residues long: Lipoyl synthase (297 aa).

[4Fe-4S] cluster is bound by residues Cys-37, Cys-42, Cys-48, Cys-63, Cys-67, Cys-70, and Ser-276. A Radical SAM core domain is found at 49–265 (WSRKHATVMI…ERIAKTKGFL (217 aa)).

The protein belongs to the radical SAM superfamily. Lipoyl synthase family. [4Fe-4S] cluster is required as a cofactor.

It is found in the cytoplasm. It carries out the reaction [[Fe-S] cluster scaffold protein carrying a second [4Fe-4S](2+) cluster] + N(6)-octanoyl-L-lysyl-[protein] + 2 oxidized [2Fe-2S]-[ferredoxin] + 2 S-adenosyl-L-methionine + 4 H(+) = [[Fe-S] cluster scaffold protein] + N(6)-[(R)-dihydrolipoyl]-L-lysyl-[protein] + 4 Fe(3+) + 2 hydrogen sulfide + 2 5'-deoxyadenosine + 2 L-methionine + 2 reduced [2Fe-2S]-[ferredoxin]. It functions in the pathway protein modification; protein lipoylation via endogenous pathway; protein N(6)-(lipoyl)lysine from octanoyl-[acyl-carrier-protein]: step 2/2. Catalyzes the radical-mediated insertion of two sulfur atoms into the C-6 and C-8 positions of the octanoyl moiety bound to the lipoyl domains of lipoate-dependent enzymes, thereby converting the octanoylated domains into lipoylated derivatives. The protein is Lipoyl synthase of Rickettsia typhi (strain ATCC VR-144 / Wilmington).